We begin with the raw amino-acid sequence, 402 residues long: Non-homologous end joining protein Ku (402 aa).

Positions 12 to 185 (ISFGLVTIPV…VAALTGIAQP (174 aa)) constitute a Ku domain. Residues 261 to 402 (QRAAGGATGG…GPDETAPGGP (142 aa)) form a disordered region. Low complexity-rich tracts occupy residues 299-308 (GDPAASVPGV) and 332-343 (VPGVPATAVPGT). The span at 344–358 (PGAPVPTAPGVPSAP) shows a compositional bias: pro residues. A compositionally biased stretch (low complexity) spans 359–376 (APGTSPTSVPGVQTAPNG).

Belongs to the prokaryotic Ku family. Homodimer. Interacts with LigD.

Its function is as follows. With LigD forms a non-homologous end joining (NHEJ) DNA repair enzyme, which repairs dsDNA breaks with reduced fidelity. Binds linear dsDNA with 5'- and 3'- overhangs but not closed circular dsDNA nor ssDNA. Recruits and stimulates the ligase activity of LigD. The polypeptide is Non-homologous end joining protein Ku (Symbiobacterium thermophilum (strain DSM 24528 / JCM 14929 / IAM 14863 / T)).